The primary structure comprises 811 residues: tRNA(Met) cytidine acetyltransferase TmcA (811 aa).

ATP-binding residues include Gln-267 and Arg-439. The N-acetyltransferase domain maps to 473–662 (KKEVYLEEPD…GEFTAIVLKP (190 aa)). Residues 589 to 591 (IAT), Glu-629, and Arg-636 each bind acetyl-CoA.

The protein belongs to the TmcA family.

It localises to the cytoplasm. The catalysed reaction is cytidine(34) in elongator tRNA(Met) + acetyl-CoA + ATP + H2O = N(4)-acetylcytidine(34) in elongator tRNA(Met) + ADP + phosphate + CoA + H(+). It catalyses the reaction a cytidine in RNA + acetyl-CoA + ATP + H2O = an N(4)-acetylcytidine in RNA + ADP + phosphate + CoA + H(+). It carries out the reaction a cytidine in tRNA + acetyl-CoA + ATP + H2O = an N(4)-acetylcytidine in tRNA + ADP + phosphate + CoA + H(+). The enzyme catalyses a cytidine in mRNA + acetyl-CoA + ATP + H2O = an N(4)-acetylcytidine in mRNA + ADP + phosphate + CoA + H(+). Functionally, catalyzes the formation of N(4)-acetylcytidine (ac(4)C) at the wobble position of tRNA(Met), by using acetyl-CoA as an acetyl donor and ATP (or GTP). Its function is as follows. Catalyzes the formation of 267 N(4)-acetylcytidine (ac(4)C) sites in RNA, almost always on the middle C of a CCG motif. Modifications are found in rRNA, ncRNA, mRNA and tRNA. More acetylation is observed at 95 than at 75 or 85 degrees Celsius. The polypeptide is tRNA(Met) cytidine acetyltransferase TmcA (Thermococcus sp. (strain AM4)).